Reading from the N-terminus, the 431-residue chain is Serine--tRNA ligase (431 aa).

237–239 serves as a coordination point for L-serine; it reads TAE. Residue 268–270 coordinates ATP; the sequence is RSE. E291 contributes to the L-serine binding site. 355–358 lines the ATP pocket; that stretch reads EISS. S390 contacts L-serine.

Belongs to the class-II aminoacyl-tRNA synthetase family. Type-1 seryl-tRNA synthetase subfamily. In terms of assembly, homodimer. The tRNA molecule binds across the dimer.

The protein localises to the cytoplasm. The enzyme catalyses tRNA(Ser) + L-serine + ATP = L-seryl-tRNA(Ser) + AMP + diphosphate + H(+). The catalysed reaction is tRNA(Sec) + L-serine + ATP = L-seryl-tRNA(Sec) + AMP + diphosphate + H(+). It functions in the pathway aminoacyl-tRNA biosynthesis; selenocysteinyl-tRNA(Sec) biosynthesis; L-seryl-tRNA(Sec) from L-serine and tRNA(Sec): step 1/1. Catalyzes the attachment of serine to tRNA(Ser). Is also able to aminoacylate tRNA(Sec) with serine, to form the misacylated tRNA L-seryl-tRNA(Sec), which will be further converted into selenocysteinyl-tRNA(Sec). The sequence is that of Serine--tRNA ligase from Neisseria meningitidis serogroup B (strain ATCC BAA-335 / MC58).